Here is a 474-residue protein sequence, read N- to C-terminus: Ribosomal protein uS12 methylthiotransferase RimO (474 aa).

Positions 37–147 (NRIGFVSLGC…VLNHVHKYVP (111 aa)) constitute an MTTase N-terminal domain. [4Fe-4S] cluster is bound by residues cysteine 46, cysteine 82, cysteine 111, cysteine 179, cysteine 183, and cysteine 186. A Radical SAM core domain is found at 165–402 (LTPKHYAYLK…MEVQAEISAE (238 aa)). Residues 405 to 471 (ARLVGRELDI…EHDLWAELVA (67 aa)) form the TRAM domain.

This sequence belongs to the methylthiotransferase family. RimO subfamily. The cofactor is [4Fe-4S] cluster.

The protein localises to the cytoplasm. It carries out the reaction L-aspartate(89)-[ribosomal protein uS12]-hydrogen + (sulfur carrier)-SH + AH2 + 2 S-adenosyl-L-methionine = 3-methylsulfanyl-L-aspartate(89)-[ribosomal protein uS12]-hydrogen + (sulfur carrier)-H + 5'-deoxyadenosine + L-methionine + A + S-adenosyl-L-homocysteine + 2 H(+). Catalyzes the methylthiolation of an aspartic acid residue of ribosomal protein uS12. The sequence is that of Ribosomal protein uS12 methylthiotransferase RimO from Shewanella amazonensis (strain ATCC BAA-1098 / SB2B).